Here is a 223-residue protein sequence, read N- to C-terminus: uncharacterized protein (223 aa).

7 helical membrane-spanning segments follow: residues 25–45 (TYFLLSMTLVTSAIAAMATMA), 46–66 (IGISPIVALVMQLAAIGILFF), 78–98 (LVWTFVFTGLMGGALGPMLNF), 105–125 (GPIVIAQALGLTGMVFLGLSA), 140–160 (FLFAGLIIVIVAALINIFVGS), 161–181 (TVAHLAISSVSALVFSGFILF), and 199–219 (ISMYLNILNLFTSLLSILGIM).

This sequence belongs to the BI1 family.

The protein resides in the cell membrane. This is an uncharacterized protein from Vibrio cholerae serotype O1 (strain ATCC 39315 / El Tor Inaba N16961).